Here is a 548-residue protein sequence, read N- to C-terminus: Synaptic vesicle 2-related protein (548 aa).

Over 1–87 (MEEDLFQLRQ…GFGKFQWKLS (87 aa)) the chain is Cytoplasmic. S25 and S31 each carry phosphoserine. The chain crosses the membrane as a helical span at residues 88–108 (VLTGLAWMADAMEMMILSILA). Topologically, residues 109–122 (PQLHCEWRLPSWQV) are vesicular. The helical transmembrane segment at 123-143 (ALLTSVVFVGMMSSSTLWGNI) threads the bilayer. Residues 144–156 (SDQYGRKTGLKIS) are Cytoplasmic-facing. The helical transmembrane segment at 157–177 (VLWTLYYGILSAFAPVYSWIL) threads the bilayer. Over 178 to 180 (VLR) the chain is Vesicular. The chain crosses the membrane as a helical span at residues 181-201 (GLVGFGIGGVPQSVTLYAEFL). Residues 202–209 (PMKARAKC) are Cytoplasmic-facing. A helical membrane pass occupies residues 210 to 230 (ILLIEVFWAIGTVFEVVLAVF). The Vesicular segment spans residues 231-238 (VMPSLGWR). The chain crosses the membrane as a helical span at residues 239 to 259 (WLLILSAVPLLLFAVLCFWLP). At 260–316 (ESARYDVLSGNQEKAIATLKRIATENGAPMPLGKLIISRQEDRGKMRDLFTPHFRWT) the chain is on the cytoplasmic side. The chain crosses the membrane as a helical span at residues 317 to 337 (TLLLWFIWFSNAFSYYGLVLL). The Vesicular segment spans residues 338 to 373 (TTELFQAGDVCSISSRKKAVEAKCSLACEYLSEEDY). The chain crosses the membrane as a helical span at residues 374–394 (MDLLWTTLSEFPGVLVTLWII). At 395 to 401 (DRLGRKK) the chain is on the cytoplasmic side. Residues 402 to 422 (TMALCFVVFSFCSLLLFICVG) form a helical membrane-spanning segment. The Vesicular portion of the chain corresponds to 423–425 (RNM). The helical transmembrane segment at 426-446 (LTLLLFIARAFISGGFQAAYV) threads the bilayer. Residues 447 to 457 (YTPEVYPTATR) lie on the Cytoplasmic side of the membrane. Residues 458 to 478 (ALGLGTCSGMARVGALITPFI) traverse the membrane as a helical segment. Residues 479-489 (AQVMLESSVYL) are Vesicular-facing. A helical transmembrane segment spans residues 490 to 510 (TLAVYSGCCLLAALASCFLPI). At 511–548 (ETKGRGLQESSHREWGQEMVGRGAHGTGVARSNSGSQE) the chain is on the cytoplasmic side. Residues 528-548 (EMVGRGAHGTGVARSNSGSQE) form a disordered region. The residue at position 542 (S542) is a Phosphoserine.

It belongs to the major facilitator superfamily. As to expression, detected in brain and adrenal medulla.

It is found in the cytoplasmic vesicle. It localises to the secretory vesicle. The protein localises to the synaptic vesicle membrane. This is Synaptic vesicle 2-related protein (SVOP) from Bos taurus (Bovine).